The primary structure comprises 89 residues: Small ribosomal subunit protein uS15 (89 aa).

Belongs to the universal ribosomal protein uS15 family. In terms of assembly, part of the 30S ribosomal subunit. Forms a bridge to the 50S subunit in the 70S ribosome, contacting the 23S rRNA.

Its function is as follows. One of the primary rRNA binding proteins, it binds directly to 16S rRNA where it helps nucleate assembly of the platform of the 30S subunit by binding and bridging several RNA helices of the 16S rRNA. Forms an intersubunit bridge (bridge B4) with the 23S rRNA of the 50S subunit in the ribosome. The chain is Small ribosomal subunit protein uS15 from Bartonella bacilliformis (strain ATCC 35685 / KC583 / Herrer 020/F12,63).